Reading from the N-terminus, the 366-residue chain is Cobalt-precorrin-5B C(1)-methyltransferase (366 aa).

Belongs to the CbiD family.

The catalysed reaction is Co-precorrin-5B + S-adenosyl-L-methionine = Co-precorrin-6A + S-adenosyl-L-homocysteine. The protein operates within cofactor biosynthesis; adenosylcobalamin biosynthesis; cob(II)yrinate a,c-diamide from sirohydrochlorin (anaerobic route): step 6/10. Functionally, catalyzes the methylation of C-1 in cobalt-precorrin-5B to form cobalt-precorrin-6A. The sequence is that of Cobalt-precorrin-5B C(1)-methyltransferase from Methanococcus maripaludis (strain C7 / ATCC BAA-1331).